The sequence spans 158 residues: Coenzyme F420 hydrogenase subunit delta (158 aa).

Belongs to the peptidase A31 family.

The polypeptide is Coenzyme F420 hydrogenase subunit delta (frhD) (Methanothermobacter thermautotrophicus (strain ATCC 29096 / DSM 1053 / JCM 10044 / NBRC 100330 / Delta H) (Methanobacterium thermoautotrophicum)).